The primary structure comprises 404 residues: Zinc finger protein zfs1 (404 aa).

Positions 134–149 (SYLHSGSSPHGNTSNH) are enriched in polar residues. 2 disordered regions span residues 134-168 (SYLHSGSSPHGNTSNHPSPISSLESLPSRSSTGSG) and 259-322 (SNAS…APNG). Residues 150–168 (PSPISSLESLPSRSSTGSG) are compositionally biased toward low complexity. Positions 259–283 (SNASIRNAPSNLSKQFSPSGNSPLT) are enriched in polar residues. The segment covering 304-317 (GSASHPHGSGSSNG) has biased composition (low complexity). 2 consecutive C3H1-type zinc fingers follow at residues 326 to 354 (LYKTEPCKNWQISGTCRYGSKCQFAHGNQ) and 364 to 392 (KYKSERCRSFMMYGYCPYGLRCCFLHDES).

As to quaternary structure, interacts with moc3.

The protein resides in the cytoplasm. Its subcellular location is the nucleus. Functionally, binds to specific AU-rich elements (ARE) in the 3'-untranslated region of target mRNAs and promotes their degradation. Binds to ARE present in the arz1 mRNA and stimulates the rate of arz1 mRNA decay. Required for coordination of septum formation with exit from mitosis. Involved in the mating response pathway. Induces sexual development and ascus formation. The protein is Zinc finger protein zfs1 (zfs1) of Schizosaccharomyces pombe (strain 972 / ATCC 24843) (Fission yeast).